Consider the following 357-residue polypeptide: DNA integrity scanning protein DisA (357 aa).

A DAC domain is found at 8 to 146; sequence VKSMINILQL…GNLRYTLKDI (139 aa). Residues Gly75, Leu93, and 106–110 each bind ATP; that span reads MRHRT.

The protein belongs to the DisA family. In terms of assembly, homooctamer. It depends on Mg(2+) as a cofactor.

It carries out the reaction 2 ATP = 3',3'-c-di-AMP + 2 diphosphate. Participates in a DNA-damage check-point that is active prior to asymmetric division when DNA is damaged. DisA forms globular foci that rapidly scan along the chromosomes during sporulation, searching for lesions. When a lesion is present, DisA pauses at the lesion site. This triggers a cellular response that culminates in a temporary block in sporulation initiation. Functionally, also has diadenylate cyclase activity, catalyzing the condensation of 2 ATP molecules into cyclic di-AMP (c-di-AMP). c-di-AMP acts as a signaling molecule that couples DNA integrity with progression of sporulation. The rise in c-di-AMP level generated by DisA while scanning the chromosome, operates as a positive signal that advances sporulation; upon encountering a lesion, the DisA focus arrests at the damaged site and halts c-di-AMP synthesis. In Bacillus cereus (strain G9842), this protein is DNA integrity scanning protein DisA.